A 1252-amino-acid polypeptide reads, in one-letter code: HEAT repeat-containing protein 6 (1252 aa).

The HEAT 1 repeat unit spans residues 230–269 (PDLLGKSGLLMKLSDVTHSDPEVRRAAVHCMANLCLSVPG). A disordered region spans residues 365-417 (DGRSPVKPQQPESSAARPSANKKKKYKVKPKKTQQGEKAEEEEPYGEVDAAPG). Basic residues predominate over residues 384–396 (ANKKKKYKVKPKK). Phosphoserine is present on residues S471 and S474. HEAT repeat units lie at residues 524 to 562 (ELGS…GSKQ), 586 to 624 (SSIR…NAPY), and 630 to 667 (SLLT…THAP). At T689 the chain carries Phosphothreonine. S714 carries the post-translational modification Phosphoserine.

This is HEAT repeat-containing protein 6 (Heatr6) from Rattus norvegicus (Rat).